The sequence spans 561 residues: Arginine--tRNA ligase (561 aa).

Residues 119–129 carry the 'HIGH' region motif; the sequence is PNIAKPMSMGH.

This sequence belongs to the class-I aminoacyl-tRNA synthetase family. In terms of assembly, monomer.

It is found in the cytoplasm. It catalyses the reaction tRNA(Arg) + L-arginine + ATP = L-arginyl-tRNA(Arg) + AMP + diphosphate. In Lactobacillus acidophilus (strain ATCC 700396 / NCK56 / N2 / NCFM), this protein is Arginine--tRNA ligase.